A 464-amino-acid chain; its full sequence is Protein ABHD18 (464 aa).

A signal peptide spans Met-1–Gly-24. Asn-341 carries an N-linked (GlcNAc...) asparagine glycan.

Belongs to the AB hydrolase superfamily.

The protein localises to the secreted. The polypeptide is Protein ABHD18 (Mus musculus (Mouse)).